The chain runs to 219 residues: MTSGESKTGLKNVYPSAKKLLPKVEEGEAEDYCTPGAFELERLFWKGSPQYTHVNEVWPKLYIGDETTALDRYGLQKAGFTHVLNAAHGRWNVDTGPDYYRDMAIEYHGVEADDLPSFDLSVFFYPAAAFIDAALRYDHNKILVHCVMGRSRSATLVLAYLMIHRNMTLVDAIQQVAKNRCVLPNRGFLKQLRELDRQLVQQRRQAQQGEDAEKCEQEP.

One can recognise a Tyrosine-protein phosphatase domain in the interval 53–201; it reads HVNEVWPKLY…LRELDRQLVQ (149 aa). 145 to 152 lines the substrate pocket; sequence HCVMGRSR. The active-site Phosphocysteine intermediate is cysteine 146.

This sequence belongs to the protein-tyrosine phosphatase family. Non-receptor class dual specificity subfamily. In terms of assembly, homodimer. Interacts with PRKAA2.

It localises to the cytoplasm. It is found in the nucleus. The enzyme catalyses O-phospho-L-tyrosyl-[protein] + H2O = L-tyrosyl-[protein] + phosphate. It carries out the reaction O-phospho-L-seryl-[protein] + H2O = L-seryl-[protein] + phosphate. The catalysed reaction is O-phospho-L-threonyl-[protein] + H2O = L-threonyl-[protein] + phosphate. In terms of biological role, dual specificity phosphatase able to dephosphorylate phosphotyrosine, phosphoserine and phosphothreonine residues within the same substrate, with a preference for phosphotyrosine as a substrate. Involved in the modulation of intracellular signaling cascades. May regulate glucose metabolism by activating, AMPK, an energy sensor protein kinase. Affects MAP kinase signaling though modulation of the ERK1/2 cascade in skeletal muscle promoting muscle cell differentiation, development and atrophy. The protein is Dual specificity phosphatase 29 (DUSP29) of Bos taurus (Bovine).